The chain runs to 703 residues: RING finger protein 214 (703 aa).

3 disordered regions span residues 1–59 (MAAS…TITK), 104–134 (GSQSDLKDVASTAGEEGDTSLRESLHPVTRS), and 146–197 (SRNC…SSSL). Ala2 bears the N-acetylalanine mark. 4 positions are modified to phosphoserine: Ser15, Ser40, Ser47, and Ser54. The segment covering 37-59 (TKDSAQKQKNSPLLSVSSQTITK) has biased composition (polar residues). Ser176 and Ser196 each carry phosphoserine. The stretch at 220–379 (QDIEKNLDKM…AEKEAELHLT (160 aa)) forms a coiled coil. A disordered region spans residues 486–552 (FPILNPALSQ…SAETPRPQPV (67 aa)). Residues 493 to 504 (LSQPSQPSSPLP) show a composition bias toward low complexity. Ser497, Ser511, and Ser516 each carry phosphoserine. The span at 523–536 (PHMPPAASIPPPPG) shows a compositional bias: pro residues. The RING-type; atypical zinc-finger motif lies at 658–700 (CLMCQKLVQPSELHPMACTHVLHKECIKFWAQTNTNDTCPFCP).

This is RING finger protein 214 (RNF214) from Homo sapiens (Human).